The sequence spans 62 residues: Bowman-Birk type proteinase inhibitor (62 aa).

7 cysteine pairs are disulfide-bonded: cysteine 8–cysteine 61, cysteine 9–cysteine 24, cysteine 12–cysteine 57, cysteine 14–cysteine 22, cysteine 31–cysteine 38, cysteine 35–cysteine 50, and cysteine 40–cysteine 48.

In terms of assembly, forms a monomer at protein concentrations of below 1 mM. At concentrations of above 2 mM, self-associates.

In terms of biological role, inhibits trypsin but not chymotrypsin. Inhibits the trypsin-like proteinase activity present in larvae of the crop pests Adoxophyes orana, Hyphantria cunea, Lobesia botrana and Ostrinia nubilalis. This Medicago scutellata (Snail medic) protein is Bowman-Birk type proteinase inhibitor.